Consider the following 212-residue polypeptide: Peptide methionine sulfoxide reductase MsrA (212 aa).

C52 is an active-site residue.

Belongs to the MsrA Met sulfoxide reductase family.

It carries out the reaction L-methionyl-[protein] + [thioredoxin]-disulfide + H2O = L-methionyl-(S)-S-oxide-[protein] + [thioredoxin]-dithiol. The catalysed reaction is [thioredoxin]-disulfide + L-methionine + H2O = L-methionine (S)-S-oxide + [thioredoxin]-dithiol. Its function is as follows. Has an important function as a repair enzyme for proteins that have been inactivated by oxidation. Catalyzes the reversible oxidation-reduction of methionine sulfoxide in proteins to methionine. The chain is Peptide methionine sulfoxide reductase MsrA from Escherichia coli (strain SMS-3-5 / SECEC).